The primary structure comprises 324 residues: GDP-mannose transporter (324 aa).

The Cytoplasmic segment spans residues 1-13 (MSELKSRIGNSGS). Residues 14-34 (IANSGPVSILCYCASSILMTV) traverse the membrane as a helical segment. At 35 to 44 (TNKFVVNTDG) the chain is on the lumenal side. The chain crosses the membrane as a helical span at residues 45–65 (FNMFFVMLFAQSLVCTMCLMV). Topologically, residues 66 to 76 (LKMFGYAKYRP) are cytoplasmic. Residues 77 to 97 (LNLIDVKNWLPISFLLVFMIF) traverse the membrane as a helical segment. Over 98–116 (TSAKALKYMPVPIYTIFKN) the chain is Lumenal. Residue Asn116 is glycosylated (N-linked (GlcNAc...) asparagine). Residues 117–137 (LTIILIAYGEVLFFGGSVTPM) form a helical membrane-spanning segment. A topological domain (cytoplasmic) is located at residue Glu138. The helical transmembrane segment at 139–159 (LSSFILMVLSSVVASLGDQQA) threads the bilayer. The Lumenal portion of the chain corresponds to 160 to 170 (AKIAQPLANNS). The N-linked (GlcNAc...) asparagine glycan is linked to Asn168. Residues 171-191 (ILSPEYYWMFLNCICSASFVL) traverse the membrane as a helical segment. At 192 to 204 (IMRKRIKLTNFKD) the chain is on the cytoplasmic side. The helical transmembrane segment at 205–225 (YDTMFYNNALALPILLGFSFL) threads the bilayer. Residues 226 to 243 (SEDWSSENLAQNFSGESL) lie on the Lumenal side of the membrane. N-linked (GlcNAc...) asparagine glycosylation is present at Asn237. The helical transmembrane segment at 244–264 (SAMIISGMTSVGISYCSGWCV) threads the bilayer. At 265–270 (RATSST) the chain is on the cytoplasmic side. A helical membrane pass occupies residues 271–291 (TYSMVGALNKLPIALAGLIFF). Residues 292-295 (DAPR) are Lumenal-facing. Residues 296–316 (NFLSIMSIFIGFASGLSYAVA) traverse the membrane as a helical segment. The Cytoplasmic segment spans residues 317–324 (KQKKVQKN).

Belongs to the TPT transporter family. SLC35D subfamily. As to quaternary structure, homooligomer.

The protein localises to the golgi apparatus membrane. It localises to the cytoplasmic vesicle membrane. The protein resides in the endoplasmic reticulum membrane. Involved in the import of GDP-mannose from the cytoplasm into the Golgi lumen. In Candida glabrata (strain ATCC 2001 / BCRC 20586 / JCM 3761 / NBRC 0622 / NRRL Y-65 / CBS 138) (Yeast), this protein is GDP-mannose transporter (VRG4).